Consider the following 193-residue polypeptide: Ion-translocating oxidoreductase complex subunit A (193 aa).

The next 6 helical transmembrane spans lie at 5-25 (LLLL…FLGL), 39-59 (IGMG…AYLV), 67-87 (LGIE…VVQF), 102-122 (LLGI…VALL), 134-154 (IIYG…FASM), and 171-191 (SIAM…TGLV).

The protein belongs to the NqrDE/RnfAE family. The complex is composed of six subunits: RnfA, RnfB, RnfC, RnfD, RnfE and RnfG.

The protein resides in the cell inner membrane. Its function is as follows. Part of a membrane-bound complex that couples electron transfer with translocation of ions across the membrane. This Vibrio cholerae serotype O1 (strain ATCC 39315 / El Tor Inaba N16961) protein is Ion-translocating oxidoreductase complex subunit A.